Here is a 78-residue protein sequence, read N- to C-terminus: MSKENLNIDRINELARKKKEHGLTNEEAKEQTKLRRQYLEEFRKGFKQQIENTKVIDPEGNDVTPEKLKKIQEEKHNK.

Residues 53 to 78 (TKVIDPEGNDVTPEKLKKIQEEKHNK) are disordered. Over residues 64–78 (TPEKLKKIQEEKHNK) the composition is skewed to basic and acidic residues.

Belongs to the UPF0291 family.

Its subcellular location is the cytoplasm. The polypeptide is UPF0291 protein SE_1024 (Staphylococcus epidermidis (strain ATCC 12228 / FDA PCI 1200)).